The primary structure comprises 95 residues: Small ribosomal subunit protein uS17 (95 aa).

It belongs to the universal ribosomal protein uS17 family. Part of the 30S ribosomal subunit.

Functionally, one of the primary rRNA binding proteins, it binds specifically to the 5'-end of 16S ribosomal RNA. This Streptomyces coelicolor (strain ATCC BAA-471 / A3(2) / M145) protein is Small ribosomal subunit protein uS17.